The chain runs to 154 residues: Endoribonuclease YbeY (154 aa).

Zn(2+) is bound by residues His113, His117, and His123.

This sequence belongs to the endoribonuclease YbeY family. Zn(2+) is required as a cofactor.

It is found in the cytoplasm. Functionally, single strand-specific metallo-endoribonuclease involved in late-stage 70S ribosome quality control and in maturation of the 3' terminus of the 16S rRNA. This chain is Endoribonuclease YbeY, found in Vibrio vulnificus (strain YJ016).